The sequence spans 133 residues: Putative HTH-type transcriptional regulator YwnA (133 aa).

Residues methionine 1–asparagine 130 form the HTH rrf2-type domain. Residues serine 24–lysine 47 constitute a DNA-binding region (H-T-H motif).

The protein is Putative HTH-type transcriptional regulator YwnA (ywnA) of Bacillus subtilis (strain 168).